Here is a 347-residue protein sequence, read N- to C-terminus: MDRMLETSETFSISGIIENEIEQRESFINDTSKIVELLFKQFNITQQQQQNNENKLINETFSMVFQLFKEMLSPLYSLVNEDMMPNIFELYQMTEDLRYYFALFNGDIKNKLKNITTTTKDLRICNNKKELIKELIKNQYDIDRKPIDQQSISNLRKEEKEKQKENENENENENENENENEKENQELDKKVNQTNDNEKDGDENENEIKDCFFLLFQLFTSIVYNLQSNCEKLLLQSIDISKNNFKRQFYNHLIKRDLNYLENLTFRLNLINDLNKKEEEKEKEKEKEKEENSFDTFSKLFLNDKQQKENTNNIINNNLLESFQIIFSNYIEKNNLNVDLILESFNN.

2 coiled-coil regions span residues aspartate 148–glycine 201 and leucine 261–serine 298. The tract at residues serine 151–glutamate 203 is disordered. Positions leucine 155–glutamate 167 are enriched in basic and acidic residues. Positions asparagine 168–asparagine 178 are enriched in acidic residues. Residues glutamate 179–valine 191 show a composition bias toward basic and acidic residues.

This is an uncharacterized protein from Dictyostelium discoideum (Social amoeba).